A 378-amino-acid chain; its full sequence is Protein RecA (378 aa).

Gly-65–Thr-72 contributes to the ATP binding site. The interval Ala-325–Lys-378 is disordered. The segment covering Asp-339–Asp-351 has biased composition (basic and acidic residues).

Belongs to the RecA family.

It localises to the cytoplasm. Its function is as follows. Can catalyze the hydrolysis of ATP in the presence of single-stranded DNA, the ATP-dependent uptake of single-stranded DNA by duplex DNA, and the ATP-dependent hybridization of homologous single-stranded DNAs. It interacts with LexA causing its activation and leading to its autocatalytic cleavage. The sequence is that of Protein RecA from Lactiplantibacillus pentosus (Lactobacillus pentosus).